A 144-amino-acid polypeptide reads, in one-letter code: Transcription antitermination protein NusB (144 aa).

The protein belongs to the NusB family.

Involved in transcription antitermination. Required for transcription of ribosomal RNA (rRNA) genes. Binds specifically to the boxA antiterminator sequence of the ribosomal RNA (rrn) operons. This Haemophilus influenzae (strain PittEE) protein is Transcription antitermination protein NusB.